Reading from the N-terminus, the 271-residue chain is Formamidopyrimidine-DNA glycosylase (271 aa).

Pro-2 (schiff-base intermediate with DNA) is an active-site residue. Glu-3 (proton donor) is an active-site residue. The active-site Proton donor; for beta-elimination activity is Lys-57. DNA contacts are provided by His-90, Arg-109, and Lys-151. The FPG-type zinc-finger motif lies at 236–270 (HVYGRGGETCTQCGNLLSEIRLGQRTTVFCGICQT). Arg-260 acts as the Proton donor; for delta-elimination activity in catalysis.

Belongs to the FPG family. In terms of assembly, monomer. Requires Zn(2+) as cofactor.

It carries out the reaction Hydrolysis of DNA containing ring-opened 7-methylguanine residues, releasing 2,6-diamino-4-hydroxy-5-(N-methyl)formamidopyrimidine.. The enzyme catalyses 2'-deoxyribonucleotide-(2'-deoxyribose 5'-phosphate)-2'-deoxyribonucleotide-DNA = a 3'-end 2'-deoxyribonucleotide-(2,3-dehydro-2,3-deoxyribose 5'-phosphate)-DNA + a 5'-end 5'-phospho-2'-deoxyribonucleoside-DNA + H(+). Its function is as follows. Involved in base excision repair of DNA damaged by oxidation or by mutagenic agents. Acts as a DNA glycosylase that recognizes and removes damaged bases. Has a preference for oxidized purines, such as 7,8-dihydro-8-oxoguanine (8-oxoG). Has AP (apurinic/apyrimidinic) lyase activity and introduces nicks in the DNA strand. Cleaves the DNA backbone by beta-delta elimination to generate a single-strand break at the site of the removed base with both 3'- and 5'-phosphates. This is Formamidopyrimidine-DNA glycosylase from Shewanella sp. (strain MR-4).